The chain runs to 417 residues: Serine hydroxymethyltransferase (417 aa).

Residues leucine 121 and 125 to 127 contribute to the (6S)-5,6,7,8-tetrahydrofolate site; that span reads GHL. Position 229 is an N6-(pyridoxal phosphate)lysine (lysine 229). 355–357 contributes to the (6S)-5,6,7,8-tetrahydrofolate binding site; it reads SPF.

The protein belongs to the SHMT family. As to quaternary structure, homodimer. Requires pyridoxal 5'-phosphate as cofactor.

It is found in the cytoplasm. The enzyme catalyses (6R)-5,10-methylene-5,6,7,8-tetrahydrofolate + glycine + H2O = (6S)-5,6,7,8-tetrahydrofolate + L-serine. It participates in one-carbon metabolism; tetrahydrofolate interconversion. Its pathway is amino-acid biosynthesis; glycine biosynthesis; glycine from L-serine: step 1/1. In terms of biological role, catalyzes the reversible interconversion of serine and glycine with tetrahydrofolate (THF) serving as the one-carbon carrier. This reaction serves as the major source of one-carbon groups required for the biosynthesis of purines, thymidylate, methionine, and other important biomolecules. Also exhibits THF-independent aldolase activity toward beta-hydroxyamino acids, producing glycine and aldehydes, via a retro-aldol mechanism. The polypeptide is Serine hydroxymethyltransferase (Xylella fastidiosa (strain M12)).